The following is a 228-amino-acid chain: Lipoprotein-releasing system ATP-binding protein LolD (228 aa).

The region spanning 5 to 228 (LRCHQVCKTY…DGLLTDITGA (224 aa)) is the ABC transporter domain. 41 to 48 (GSSGSGKS) lines the ATP pocket.

Belongs to the ABC transporter superfamily. Lipoprotein translocase (TC 3.A.1.125) family. As to quaternary structure, the complex is composed of two ATP-binding proteins (LolD) and two transmembrane proteins (LolC and LolE).

It localises to the cell inner membrane. Part of the ABC transporter complex LolCDE involved in the translocation of mature outer membrane-directed lipoproteins, from the inner membrane to the periplasmic chaperone, LolA. Responsible for the formation of the LolA-lipoprotein complex in an ATP-dependent manner. In Vibrio cholerae serotype O1 (strain ATCC 39315 / El Tor Inaba N16961), this protein is Lipoprotein-releasing system ATP-binding protein LolD.